We begin with the raw amino-acid sequence, 175 residues long: B9 domain-containing protein 2 (175 aa).

In terms of domain architecture, C2 B9-type spans 2 to 118 (AEVHVIGQII…ACPTWRPLGS (117 aa)).

The protein belongs to the B9D family. In terms of assembly, part of the tectonic-like complex (also named B9 complex). Interacts with TUBG1.

Its subcellular location is the cytoplasm. The protein localises to the cytoskeleton. It localises to the cilium basal body. The protein resides in the cilium axoneme. It is found in the nucleus. Functionally, component of the tectonic-like complex, a complex localized at the transition zone of primary cilia and acting as a barrier that prevents diffusion of transmembrane proteins between the cilia and plasma membranes. This chain is B9 domain-containing protein 2 (B9D2), found in Homo sapiens (Human).